The chain runs to 258 residues: Imidazole glycerol phosphate synthase subunit HisF (258 aa).

Active-site residues include Asp11 and Asp130.

It belongs to the HisA/HisF family. Heterodimer of HisH and HisF.

The protein localises to the cytoplasm. It carries out the reaction 5-[(5-phospho-1-deoxy-D-ribulos-1-ylimino)methylamino]-1-(5-phospho-beta-D-ribosyl)imidazole-4-carboxamide + L-glutamine = D-erythro-1-(imidazol-4-yl)glycerol 3-phosphate + 5-amino-1-(5-phospho-beta-D-ribosyl)imidazole-4-carboxamide + L-glutamate + H(+). The protein operates within amino-acid biosynthesis; L-histidine biosynthesis; L-histidine from 5-phospho-alpha-D-ribose 1-diphosphate: step 5/9. Its function is as follows. IGPS catalyzes the conversion of PRFAR and glutamine to IGP, AICAR and glutamate. The HisF subunit catalyzes the cyclization activity that produces IGP and AICAR from PRFAR using the ammonia provided by the HisH subunit. The chain is Imidazole glycerol phosphate synthase subunit HisF from Blochmanniella floridana.